The primary structure comprises 391 residues: Chorismate synthase (391 aa).

Positions 39 and 45 each coordinate NADP(+). FMN is bound by residues 133-135 (RAS), 254-255 (QA), glycine 299, 314-318 (KPIAT), and arginine 340.

This sequence belongs to the chorismate synthase family. In terms of assembly, homotetramer. It depends on FMNH2 as a cofactor.

The catalysed reaction is 5-O-(1-carboxyvinyl)-3-phosphoshikimate = chorismate + phosphate. It functions in the pathway metabolic intermediate biosynthesis; chorismate biosynthesis; chorismate from D-erythrose 4-phosphate and phosphoenolpyruvate: step 7/7. Catalyzes the anti-1,4-elimination of the C-3 phosphate and the C-6 proR hydrogen from 5-enolpyruvylshikimate-3-phosphate (EPSP) to yield chorismate, which is the branch point compound that serves as the starting substrate for the three terminal pathways of aromatic amino acid biosynthesis. This reaction introduces a second double bond into the aromatic ring system. The protein is Chorismate synthase of Symbiobacterium thermophilum (strain DSM 24528 / JCM 14929 / IAM 14863 / T).